A 332-amino-acid chain; its full sequence is DNA-directed RNA polymerase subunit alpha (332 aa).

Residues 1 to 230 (MKKITTSAYM…KQMSIFNNVL (230 aa)) form an alpha N-terminal domain (alpha-NTD) region. The segment at 246 to 332 (EHSKLLESVE…LRKKISELKS (87 aa)) is alpha C-terminal domain (alpha-CTD).

This sequence belongs to the RNA polymerase alpha chain family. In terms of assembly, homodimer. The RNAP catalytic core consists of 2 alpha, 1 beta, 1 beta' and 1 omega subunit. When a sigma factor is associated with the core the holoenzyme is formed, which can initiate transcription.

The catalysed reaction is RNA(n) + a ribonucleoside 5'-triphosphate = RNA(n+1) + diphosphate. Functionally, DNA-dependent RNA polymerase catalyzes the transcription of DNA into RNA using the four ribonucleoside triphosphates as substrates. The chain is DNA-directed RNA polymerase subunit alpha from Campylobacter fetus subsp. fetus (strain 82-40).